The sequence spans 208 residues: MAGGKRGGKVAPTKTFGRDYERSKGKISRDRVYDEEDIIKRNQESDSDDNSGSESGSENETKNNNNKSKLGSDSSDDEPVIVSRNPNAKKPAAKRPPTTKKQQESDSEDDSDKESDSEDEIANPNRMKQVTKKLSEINVNAKVELSRREKEELARQAATQRQNEKQQKSDLERLQVIRKQREEAAKRKEEEKKANEEKMAERRRLGLA.

Disordered stretches follow at residues 1-133 and 145-208; these read MAGG…VTKK and LSRR…LGLA. A compositionally biased stretch (basic and acidic residues) spans 16-44; the sequence is FGRDYERSKGKISRDRVYDEEDIIKRNQE. Composition is skewed to low complexity over residues 52-69 and 84-100; these read GSES…NKSK and RNPN…PTTK. Positions 105–121 are enriched in acidic residues; it reads SDSEDDSDKESDSEDEI. A coiled-coil region spans residues 137–206; it reads INVNAKVELS…EKMAERRRLG (70 aa). 2 stretches are compositionally biased toward basic and acidic residues: residues 145 to 154 and 162 to 208; these read LSRREKEELA and QNEK…LGLA.

The protein belongs to the PDAP1 family.

The protein is 28 kDa heat- and acid-stable phosphoprotein homolog of Dictyostelium discoideum (Social amoeba).